Here is a 232-residue protein sequence, read N- to C-terminus: Uracil phosphoribosyltransferase (232 aa).

38 to 42 (KGLVK) serves as a coordination point for GTP. Residues R87, R112, and 140–148 (DPMIATGST) each bind 5-phospho-alpha-D-ribose 1-diphosphate. Uracil-binding positions include I204 and 209 to 211 (GDA). Position 210 (D210) interacts with 5-phospho-alpha-D-ribose 1-diphosphate.

The protein belongs to the UPRTase family. It depends on Mg(2+) as a cofactor.

The enzyme catalyses UMP + diphosphate = 5-phospho-alpha-D-ribose 1-diphosphate + uracil. It participates in pyrimidine metabolism; UMP biosynthesis via salvage pathway; UMP from uracil: step 1/1. Allosterically activated by GTP. Catalyzes the conversion of uracil and 5-phospho-alpha-D-ribose 1-diphosphate (PRPP) to UMP and diphosphate. The protein is Uracil phosphoribosyltransferase of Pyrococcus furiosus (strain ATCC 43587 / DSM 3638 / JCM 8422 / Vc1).